The following is a 332-amino-acid chain: 5-dehydro-2-deoxygluconokinase 1 (332 aa).

This sequence belongs to the carbohydrate kinase PfkB family.

The catalysed reaction is 5-dehydro-2-deoxy-D-gluconate + ATP = 6-phospho-5-dehydro-2-deoxy-D-gluconate + ADP + H(+). It functions in the pathway polyol metabolism; myo-inositol degradation into acetyl-CoA; acetyl-CoA from myo-inositol: step 5/7. Its function is as follows. Catalyzes the phosphorylation of 5-dehydro-2-deoxy-D-gluconate (2-deoxy-5-keto-D-gluconate or DKG) to 6-phospho-5-dehydro-2-deoxy-D-gluconate (DKGP). This Bacillus cereus (strain ZK / E33L) protein is 5-dehydro-2-deoxygluconokinase 1.